A 150-amino-acid chain; its full sequence is U1 small nuclear ribonucleoprotein C (150 aa).

The segment at 4–36 adopts a Matrin-type zinc-finger fold; it reads YYCDYCKSYLTHDTMSVRKSHLQGRNHIKFYCD. Residues 66–132 form a disordered region; the sequence is SDAKKSNGSS…GLPLPPPAVY (67 aa). The segment covering 80–92 has biased composition (basic and acidic residues); the sequence is DIDKKENSSDHNK. Residues 103-112 show a composition bias toward acidic residues; sequence NDNDDDDDEM. A compositionally biased stretch (pro residues) spans 115-130; it reads LPPPPNLSGLPLPPPA.

It belongs to the U1 small nuclear ribonucleoprotein C family. As to quaternary structure, U1 snRNP is composed of the 7 core Sm proteins B/B', D1, D2, D3, E, F and G that assemble in a heptameric protein ring on the Sm site of the small nuclear RNA to form the core snRNP, and at least 3 U1 snRNP-specific proteins U1-70K, U1-A and U1-C. U1-C interacts with U1 snRNA and the 5' splice-site region of the pre-mRNA.

It localises to the nucleus. Functionally, component of the spliceosomal U1 snRNP, which is essential for recognition of the pre-mRNA 5' splice-site and the subsequent assembly of the spliceosome. U1-C is directly involved in initial 5' splice-site recognition for both constitutive and regulated alternative splicing. The interaction with the 5' splice-site seems to precede base-pairing between the pre-mRNA and the U1 snRNA. Stimulates commitment or early (E) complex formation by stabilizing the base pairing of the 5' end of the U1 snRNA and the 5' splice-site region. The polypeptide is U1 small nuclear ribonucleoprotein C (Candida albicans (strain SC5314 / ATCC MYA-2876) (Yeast)).